We begin with the raw amino-acid sequence, 473 residues long: 3-isopropylmalate dehydratase large subunit (473 aa).

C354, C414, and C417 together coordinate [4Fe-4S] cluster.

The protein belongs to the aconitase/IPM isomerase family. LeuC type 1 subfamily. As to quaternary structure, heterodimer of LeuC and LeuD. The cofactor is [4Fe-4S] cluster.

It carries out the reaction (2R,3S)-3-isopropylmalate = (2S)-2-isopropylmalate. Its pathway is amino-acid biosynthesis; L-leucine biosynthesis; L-leucine from 3-methyl-2-oxobutanoate: step 2/4. Its function is as follows. Catalyzes the isomerization between 2-isopropylmalate and 3-isopropylmalate, via the formation of 2-isopropylmaleate. The chain is 3-isopropylmalate dehydratase large subunit from Rhodopseudomonas palustris (strain BisB18).